The sequence spans 232 residues: Ribose-5-phosphate isomerase A (232 aa).

Substrate contacts are provided by residues 31-34 (TGST), 87-90 (DGAD), and 100-103 (KGGG). Catalysis depends on glutamate 109, which acts as the Proton acceptor. Lysine 127 is a binding site for substrate.

It belongs to the ribose 5-phosphate isomerase family. In terms of assembly, homodimer.

It catalyses the reaction aldehydo-D-ribose 5-phosphate = D-ribulose 5-phosphate. The protein operates within carbohydrate degradation; pentose phosphate pathway; D-ribose 5-phosphate from D-ribulose 5-phosphate (non-oxidative stage): step 1/1. Its function is as follows. Catalyzes the reversible conversion of ribose-5-phosphate to ribulose 5-phosphate. In Bifidobacterium longum (strain NCC 2705), this protein is Ribose-5-phosphate isomerase A.